A 183-amino-acid polypeptide reads, in one-letter code: Adenine phosphoribosyltransferase (183 aa).

The protein belongs to the purine/pyrimidine phosphoribosyltransferase family. Homodimer.

The protein resides in the cytoplasm. It catalyses the reaction AMP + diphosphate = 5-phospho-alpha-D-ribose 1-diphosphate + adenine. Its pathway is purine metabolism; AMP biosynthesis via salvage pathway; AMP from adenine: step 1/1. Its function is as follows. Catalyzes a salvage reaction resulting in the formation of AMP, that is energically less costly than de novo synthesis. This chain is Adenine phosphoribosyltransferase, found in Salmonella heidelberg (strain SL476).